Here is a 269-residue protein sequence, read N- to C-terminus: tRNA pseudouridine synthase A (269 aa).

D51 serves as the catalytic Nucleophile. Residue Y109 coordinates substrate.

It belongs to the tRNA pseudouridine synthase TruA family. In terms of assembly, homodimer.

It carries out the reaction uridine(38/39/40) in tRNA = pseudouridine(38/39/40) in tRNA. Functionally, formation of pseudouridine at positions 38, 39 and 40 in the anticodon stem and loop of transfer RNAs. The protein is tRNA pseudouridine synthase A of Aeromonas salmonicida (strain A449).